Here is a 180-residue protein sequence, read N- to C-terminus: Oligoribonuclease (180 aa).

Residues 7–170 (LIWIDLEMTG…DDIRESIAEL (164 aa)) enclose the Exonuclease domain. The active site involves Y128.

It belongs to the oligoribonuclease family.

The protein resides in the cytoplasm. 3'-to-5' exoribonuclease specific for small oligoribonucleotides. The chain is Oligoribonuclease from Pseudomonas fluorescens (strain Pf0-1).